We begin with the raw amino-acid sequence, 469 residues long: Sulfate adenylyltransferase subunit 1 (469 aa).

Positions 22 to 237 (KEVLRFITCG…LEEVPVKSEE (216 aa)) constitute a tr-type G domain. The interval 31-38 (GSVDDGKS) is G1. A GTP-binding site is contributed by 31–38 (GSVDDGKS). The segment at 89 to 93 (GITID) is G2. The segment at 110–113 (DTPG) is G3. Residues 110-114 (DTPGH) and 165-168 (NKMD) contribute to the GTP site. Residues 165-168 (NKMD) are G4. The interval 202–204 (SAK) is G5.

Belongs to the TRAFAC class translation factor GTPase superfamily. Classic translation factor GTPase family. CysN/NodQ subfamily. As to quaternary structure, heterodimer composed of CysD, the smaller subunit, and CysN.

It carries out the reaction sulfate + ATP + H(+) = adenosine 5'-phosphosulfate + diphosphate. It functions in the pathway sulfur metabolism; hydrogen sulfide biosynthesis; sulfite from sulfate: step 1/3. With CysD forms the ATP sulfurylase (ATPS) that catalyzes the adenylation of sulfate producing adenosine 5'-phosphosulfate (APS) and diphosphate, the first enzymatic step in sulfur assimilation pathway. APS synthesis involves the formation of a high-energy phosphoric-sulfuric acid anhydride bond driven by GTP hydrolysis by CysN coupled to ATP hydrolysis by CysD. This chain is Sulfate adenylyltransferase subunit 1, found in Methylorubrum extorquens (strain PA1) (Methylobacterium extorquens).